A 100-amino-acid chain; its full sequence is Replication restart protein PriB (100 aa).

The region spanning 1–99 (MGFNNLVSLA…LRIQNIQEYK (99 aa)) is the SSB domain.

It belongs to the PriB family. In terms of assembly, homodimer. Interacts with PriA and DnaT. Component of the replication restart primosome. Primosome assembly occurs via a 'hand-off' mechanism. PriA binds to replication forks, subsequently PriB then DnaT bind; DnaT then displaces ssDNA to generate the helicase loading substrate.

In terms of biological role, involved in the restart of stalled replication forks, which reloads the replicative helicase on sites other than the origin of replication; the PriA-PriB pathway is the major replication restart pathway. During primosome assembly it facilitates complex formation between PriA and DnaT on DNA; stabilizes PriA on DNA. Stimulates the DNA unwinding activity of PriA helicase. The chain is Replication restart protein PriB from Neisseria meningitidis serogroup A / serotype 4A (strain DSM 15465 / Z2491).